The chain runs to 672 residues: uncharacterized protein (672 aa).

Over residues 1–10 the composition is skewed to basic and acidic residues; that stretch reads MAKSDGDDPL. Residues 1 to 41 are disordered; it reads MAKSDGDDPLRPASPRLRSSRRHSLRYSAYTGGPDPLAPPV.

This is an uncharacterized protein from Mycobacterium bovis (strain ATCC BAA-935 / AF2122/97).